The sequence spans 335 residues: Nuclear distribution protein nudE homolog 1 (335 aa).

The self-association stretch occupies residues 1-93 (MEDSGKTFSS…VQHSEGYRQI (93 aa)). Residues 18 to 188 (WKDLAMTYKQ…ELAVQQKQEK (171 aa)) adopt a coiled-coil conformation. The tract at residues 88–156 (EGYRQISALE…ERNAFLESEL (69 aa)) is interaction with PAFAH1B1. Residues 167-290 (QRLKDEARDL…QSPNRTGGPA (124 aa)) form an interaction with CENPF region. Positions 181–246 (AVQQKQEKPR…DDSTGGTPLT (66 aa)) are disordered. A compositionally biased stretch (polar residues) spans 204–214 (TAVQATGSVPS). S211 bears the Phosphoserine mark. A phosphothreonine mark is found at T215 and T228. Phosphoserine occurs at positions 231 and 239. 2 positions are modified to phosphothreonine: T243 and T246. C274 carries the S-palmitoyl cysteine; by ZDHHC2, ZDHHC3 and ZDHHC7 lipid modification. The tract at residues 279–335 (YDQSPNRTGGPASGRSSKNRDGGERRPSSTSVPLGDKGLDTSCRWLSKSTTRSSSSC) is disordered. At S282 the chain carries Phosphoserine. Residues 296–305 (KNRDGGERRP) show a composition bias toward basic and acidic residues. Phosphoserine is present on S309. Positions 325-335 (SKSTTRSSSSC) are enriched in low complexity.

It belongs to the nudE family. Homodimer. Interacts with CNTRL, LIS1, dynein, SLMAP and TCP1. Interacts with CENPF, dynactin, tubulin gamma, PAFAH1B1, PCM1 and PCNT. Interacts with ZNF365. Interacts with GTP-bound RAB9A and RAB9B; the interaction leads to RAB9-dynein motor tethering. Interacts (via C-terminus) with MCRS1 (via C-terminus); phosphorylation of NDE1 inhibits the interaction. Phosphorylated in mitosis. Phosphorylated in vitro by CDC2. Phosphorylation at Thr-246 is essential for the G2/M transition. In terms of tissue distribution, expressed in the neuroepithelium throughout the developing brain, including the cerebral cortex and cerebellum.

It localises to the cytoplasm. The protein localises to the cytoskeleton. Its subcellular location is the microtubule organizing center. It is found in the centrosome. The protein resides in the chromosome. It localises to the centromere. The protein localises to the kinetochore. Its subcellular location is the spindle. It is found in the cleavage furrow. The protein resides in the cytoplasmic vesicle membrane. Functionally, required for centrosome duplication and formation and function of the mitotic spindle. Essential for the development of the cerebral cortex. May regulate the production of neurons by controlling the orientation of the mitotic spindle during division of cortical neuronal progenitors of the proliferative ventricular zone of the brain. Orientation of the division plane perpendicular to the layers of the cortex gives rise to two proliferative neuronal progenitors whereas parallel orientation of the division plane yields one proliferative neuronal progenitor and a postmitotic neuron. A premature shift towards a neuronal fate within the progenitor population may result in an overall reduction in the final number of neurons and an increase in the number of neurons in the deeper layers of the cortex. Acts as a RAB9A/B effector that tethers RAB9-associated late endosomes to the dynein motor for their retrograde transport to the trans-Golgi network. The protein is Nuclear distribution protein nudE homolog 1 of Homo sapiens (Human).